A 440-amino-acid chain; its full sequence is 3-phosphoshikimate 1-carboxyvinyltransferase (440 aa).

Residues K29 and R34 each coordinate 3-phosphoshikimate. Residue K29 coordinates phosphoenolpyruvate. Residues G99 and R128 each contribute to the phosphoenolpyruvate site. Residues S171, S172, Q173, S199, D316, and K343 each coordinate 3-phosphoshikimate. Q173 contributes to the phosphoenolpyruvate binding site. The active-site Proton acceptor is the D316. Phosphoenolpyruvate contacts are provided by R347, R390, and K416.

It belongs to the EPSP synthase family. In terms of assembly, monomer.

It is found in the cytoplasm. The enzyme catalyses 3-phosphoshikimate + phosphoenolpyruvate = 5-O-(1-carboxyvinyl)-3-phosphoshikimate + phosphate. It participates in metabolic intermediate biosynthesis; chorismate biosynthesis; chorismate from D-erythrose 4-phosphate and phosphoenolpyruvate: step 6/7. Functionally, catalyzes the transfer of the enolpyruvyl moiety of phosphoenolpyruvate (PEP) to the 5-hydroxyl of shikimate-3-phosphate (S3P) to produce enolpyruvyl shikimate-3-phosphate and inorganic phosphate. The protein is 3-phosphoshikimate 1-carboxyvinyltransferase of Deinococcus geothermalis (strain DSM 11300 / CIP 105573 / AG-3a).